The sequence spans 700 residues: Sex comb on midleg-like protein 2 (700 aa).

The disordered stretch occupies residues 1-33 (MGQTVNEDSMDVKKENQEKTPQSSTSSVQRDDF). Over residues 19–28 (KTPQSSTSSV) the composition is skewed to polar residues. MBT repeat units lie at residues 33–131 (FHWE…LQPP) and 139–240 (SSWP…LQPP). The span at 253-281 (TESSPSEASQHSMQSPQKTTLILPTQQVR) shows a compositional bias: polar residues. Disordered regions lie at residues 253 to 320 (TESS…EKPL) and 466 to 550 (PFSS…SSLN). Residues Ser256, Ser261, Ser267, Ser299, and Ser300 each carry the phosphoserine modification. Thr305 is subject to Phosphothreonine. Basic and acidic residues predominate over residues 476–495 (SSAEHDKNQSAKEDVTERQS). Ser499 bears the Phosphoserine mark. The residue at position 503 (Thr503) is a Phosphothreonine. Phosphoserine is present on Ser511. Lys518 participates in a covalent cross-link: Glycyl lysine isopeptide (Lys-Gly) (interchain with G-Cter in SUMO2). Ser522 carries the post-translational modification Phosphoserine. A compositionally biased stretch (basic and acidic residues) spans 535 to 545 (PKEENLSEDSK). Lys536 participates in a covalent cross-link: Glycyl lysine isopeptide (Lys-Gly) (interchain with G-Cter in SUMO2). Phosphoserine is present on residues Ser570, Ser583, Ser590, and Ser594. Positions 575 to 584 (RSVPGTTSSP) are enriched in polar residues. The interval 575-594 (RSVPGTTSSPLVGDISPKSS) is disordered. Residues Lys599 and Lys605 each participate in a glycyl lysine isopeptide (Lys-Gly) (interchain with G-Cter in SUMO2) cross-link. Positions 631–700 (WSVDEVIQFM…IEKLKEGKYS (70 aa)) constitute an SAM domain.

The protein belongs to the SCM family. Highly expressed in placenta, thymus and testis. Detected at lower levels in brain, liver, skeletal muscle, pancreas and ovary.

The protein resides in the nucleus. In terms of biological role, putative Polycomb group (PcG) protein. PcG proteins act by forming multiprotein complexes, which are required to maintain the transcriptionally repressive state of homeotic genes throughout development. The polypeptide is Sex comb on midleg-like protein 2 (SCML2) (Homo sapiens (Human)).